A 63-amino-acid polypeptide reads, in one-letter code: Large ribosomal subunit protein uL29 (63 aa).

Belongs to the universal ribosomal protein uL29 family.

The chain is Large ribosomal subunit protein uL29 from Flavobacterium psychrophilum (strain ATCC 49511 / DSM 21280 / CIP 103535 / JIP02/86).